Reading from the N-terminus, the 258-residue chain is GTP cyclohydrolase FolE2 (258 aa).

Belongs to the GTP cyclohydrolase IV family.

The enzyme catalyses GTP + H2O = 7,8-dihydroneopterin 3'-triphosphate + formate + H(+). The protein operates within cofactor biosynthesis; 7,8-dihydroneopterin triphosphate biosynthesis; 7,8-dihydroneopterin triphosphate from GTP: step 1/1. Converts GTP to 7,8-dihydroneopterin triphosphate. This Geobacter sulfurreducens (strain ATCC 51573 / DSM 12127 / PCA) protein is GTP cyclohydrolase FolE2.